A 117-amino-acid chain; its full sequence is Large ribosomal subunit protein bL20 (117 aa).

This sequence belongs to the bacterial ribosomal protein bL20 family.

Binds directly to 23S ribosomal RNA and is necessary for the in vitro assembly process of the 50S ribosomal subunit. It is not involved in the protein synthesizing functions of that subunit. The sequence is that of Large ribosomal subunit protein bL20 from Vibrio atlanticus (strain LGP32) (Vibrio splendidus (strain Mel32)).